The sequence spans 380 residues: UDP-N-acetylglucosamine--N-acetylmuramyl-(pentapeptide) pyrophosphoryl-undecaprenol N-acetylglucosamine transferase (380 aa).

Residues 23-25 (TGG), Asn137, Arg178, Ser210, Ile266, and Gln311 each bind UDP-N-acetyl-alpha-D-glucosamine.

The protein belongs to the glycosyltransferase 28 family. MurG subfamily.

It is found in the cell inner membrane. The catalysed reaction is di-trans,octa-cis-undecaprenyl diphospho-N-acetyl-alpha-D-muramoyl-L-alanyl-D-glutamyl-meso-2,6-diaminopimeloyl-D-alanyl-D-alanine + UDP-N-acetyl-alpha-D-glucosamine = di-trans,octa-cis-undecaprenyl diphospho-[N-acetyl-alpha-D-glucosaminyl-(1-&gt;4)]-N-acetyl-alpha-D-muramoyl-L-alanyl-D-glutamyl-meso-2,6-diaminopimeloyl-D-alanyl-D-alanine + UDP + H(+). It functions in the pathway cell wall biogenesis; peptidoglycan biosynthesis. In terms of biological role, cell wall formation. Catalyzes the transfer of a GlcNAc subunit on undecaprenyl-pyrophosphoryl-MurNAc-pentapeptide (lipid intermediate I) to form undecaprenyl-pyrophosphoryl-MurNAc-(pentapeptide)GlcNAc (lipid intermediate II). This chain is UDP-N-acetylglucosamine--N-acetylmuramyl-(pentapeptide) pyrophosphoryl-undecaprenol N-acetylglucosamine transferase, found in Bacteroides fragilis (strain ATCC 25285 / DSM 2151 / CCUG 4856 / JCM 11019 / LMG 10263 / NCTC 9343 / Onslow / VPI 2553 / EN-2).